A 262-amino-acid chain; its full sequence is Diaminopimelate epimerase (262 aa).

Substrate-binding residues include Asn17, Gln45, and Asn63. Cys72 functions as the Proton donor in the catalytic mechanism. Substrate contacts are provided by residues 73-74, Asn154, Asn187, and 205-206; these read GN and ER. Cys214 functions as the Proton acceptor in the catalytic mechanism. Position 215-216 (215-216) interacts with substrate; that stretch reads GS.

Belongs to the diaminopimelate epimerase family. As to quaternary structure, homodimer.

The protein resides in the cytoplasm. The catalysed reaction is (2S,6S)-2,6-diaminopimelate = meso-2,6-diaminopimelate. The protein operates within amino-acid biosynthesis; L-lysine biosynthesis via DAP pathway; DL-2,6-diaminopimelate from LL-2,6-diaminopimelate: step 1/1. Catalyzes the stereoinversion of LL-2,6-diaminopimelate (L,L-DAP) to meso-diaminopimelate (meso-DAP), a precursor of L-lysine and an essential component of the bacterial peptidoglycan. The chain is Diaminopimelate epimerase from Wolbachia sp. subsp. Drosophila simulans (strain wRi).